The sequence spans 491 residues: CGFSTVGSGFGSRAFSCVSACGPRPGRCCITAAPYRGISCYRGLTGGFGSRSVCGGFRAGSCGRSFGYRSGGVCGPSPPCITTVSVNESLLTPLNLEIDPNAQCVKQEEKEQIKCLNNRFAAFIDKVRFLEQQNKLLETKLQFFQNRQCCESNLEPLFEGYIETLRREAECVEADSGRLSSELNHVQEVLEGYKKKYEQEVALRATAENEFVALKKDVDCAYVRKSDLEANSEALIQEIDFLRRLYQEEIRVLQANISDTSVIVKMDNSRDLNMDCIVAEIKAQYDDIASRSRAEAESWYRSKCEEIKATVIRHGETLRRTKEEINELNRVIQRLTAEVENAKCQNSKLEAAVTQAEQQGEVALNDARCKLAGLEEALQKAKQDMACLLKEYQEVMNSKLGLDIEIATYRRLLEGEEQRLCEGVGAVNVCVSSSRGGVVCGDLCVSGSRPVTGSVCSAPCSGNLAVSTGLCAPCGQLNTTCGGGSCSLGRC.

A Blocked amino end (Cys) modification is found at C1. The segment at 1-109 (CGFSTVGSGF…PNAQCVKQEE (109 aa)) is head. Residues 109–420 (EKEQIKCLNN…RLLEGEEQRL (312 aa)) form the IF rod domain. The coil 1A stretch occupies residues 110 to 144 (KEQIKCLNNRFAAFIDKVRFLEQQNKLLETKLQFF). Residues 145-154 (QNRQCCESNL) form a linker 1 region. The segment at 155 to 255 (EPLFEGYIET…YQEEIRVLQA (101 aa)) is coil 1B. A linker 12 region spans residues 256 to 272 (NISDTSVIVKMDNSRDL). A coil 2 region spans residues 273–416 (NMDCIVAEIK…ATYRRLLEGE (144 aa)). The tail stretch occupies residues 417 to 491 (EQRLCEGVGA…GGGSCSLGRC (75 aa)).

It belongs to the intermediate filament family.

Functionally, wool microfibrillar keratin. This Ovis aries (Sheep) protein is Keratin, type II microfibrillar, component 7C.